A 246-amino-acid polypeptide reads, in one-letter code: Uridylate kinase (246 aa).

K11–G14 lines the ATP pocket. Residue G53 participates in UMP binding. The ATP site is built by G54 and R58. UMP contacts are provided by residues D73 and T134–T141. Residues T161, Y167, and D170 each contribute to the ATP site.

This sequence belongs to the UMP kinase family. Homohexamer.

It is found in the cytoplasm. The enzyme catalyses UMP + ATP = UDP + ADP. Its pathway is pyrimidine metabolism; CTP biosynthesis via de novo pathway; UDP from UMP (UMPK route): step 1/1. Inhibited by UTP. Its function is as follows. Catalyzes the reversible phosphorylation of UMP to UDP. The sequence is that of Uridylate kinase from Leptospira borgpetersenii serovar Hardjo-bovis (strain JB197).